Consider the following 437-residue polypeptide: GTPase Obg (437 aa).

Residues 2 to 160 (SMFLDTAKIK…RNLELELKVL (159 aa)) form the Obg domain. An OBG-type G domain is found at 161–338 (ADVGLVGFPS…LLEATAELLE (178 aa)). Residues 167 to 174 (GFPSVGKS), 192 to 196 (FTTIV), 214 to 217 (DLPG), 284 to 287 (NKMD), and 319 to 321 (SGI) each bind GTP. The Mg(2+) site is built by S174 and T194. In terms of domain architecture, OCT spans 359–437 (GFNPDEPEFA…IGKFEFEFVD (79 aa)).

Belongs to the TRAFAC class OBG-HflX-like GTPase superfamily. OBG GTPase family. As to quaternary structure, monomer. It depends on Mg(2+) as a cofactor.

The protein localises to the cytoplasm. An essential GTPase which binds GTP, GDP and possibly (p)ppGpp with moderate affinity, with high nucleotide exchange rates and a fairly low GTP hydrolysis rate. Plays a role in control of the cell cycle, stress response, ribosome biogenesis and in those bacteria that undergo differentiation, in morphogenesis control. This is GTPase Obg from Streptococcus suis (strain 05ZYH33).